A 594-amino-acid polypeptide reads, in one-letter code: Protein REBELOTE (594 aa).

The span at 1–13 shows a compositional bias: basic residues; it reads MGKLGKKARKFAK. 2 disordered regions span residues 1 to 21 and 35 to 58; these read MGKL…SVEK and AKRN…PKKR. 3 consecutive short sequence motifs (nuclear localization signal) follow at residues 8 to 15, 35 to 42, and 512 to 519; these read ARKFAKKN, AKRNERHQ, and LKKFHERS. The span at 36-58 shows a compositional bias: basic and acidic residues; that stretch reads KRNERHQAGDKQEKKVEQQPKKR.

This sequence belongs to the NOC2 family. As to quaternary structure, interacts with SWA2, NOC2 and NOC3 in both the nucleolus and nucleoplasm. Binds to ENAP1 and OBE1. In terms of tissue distribution, expressed at low levels in roots, shoots, leaves, stems, inflorescences, flowers and siliques, with highest levels dividing tissues.

The protein localises to the nucleus. Its subcellular location is the nucleolus. It is found in the nucleoplasm. Functionally, collaboratively with CYP40/SQN and ULT1, influences floral meristem (FM) determinacy in an AGAMOUS and SUPERMAN-dependent manner, thus contributing to the floral developmental homeostasis. This is Protein REBELOTE from Arabidopsis thaliana (Mouse-ear cress).